A 352-amino-acid chain; its full sequence is Nicotinate-nucleotide--dimethylbenzimidazole phosphoribosyltransferase (352 aa).

E318 functions as the Proton acceptor in the catalytic mechanism.

This sequence belongs to the CobT family.

The enzyme catalyses 5,6-dimethylbenzimidazole + nicotinate beta-D-ribonucleotide = alpha-ribazole 5'-phosphate + nicotinate + H(+). The protein operates within nucleoside biosynthesis; alpha-ribazole biosynthesis; alpha-ribazole from 5,6-dimethylbenzimidazole: step 1/2. Catalyzes the synthesis of alpha-ribazole-5'-phosphate from nicotinate mononucleotide (NAMN) and 5,6-dimethylbenzimidazole (DMB). This chain is Nicotinate-nucleotide--dimethylbenzimidazole phosphoribosyltransferase, found in Azotobacter vinelandii (strain DJ / ATCC BAA-1303).